Reading from the N-terminus, the 861-residue chain is Leucine--tRNA ligase (861 aa).

Positions 42–52 (PYPSGRLHMGH) match the 'HIGH' region motif. Residues 619–623 (KMSKS) carry the 'KMSKS' region motif. Lys-622 lines the ATP pocket.

It belongs to the class-I aminoacyl-tRNA synthetase family.

The protein resides in the cytoplasm. It catalyses the reaction tRNA(Leu) + L-leucine + ATP = L-leucyl-tRNA(Leu) + AMP + diphosphate. The protein is Leucine--tRNA ligase of Haemophilus ducreyi (strain 35000HP / ATCC 700724).